The primary structure comprises 474 residues: Homeobox protein PKNOX2 (474 aa).

The disordered stretch occupies residues 1–42; that stretch reads MMQHASPAPALTMMATQNVPPPPYQDSPQMTATAQPPSKAQA. A compositionally biased stretch (polar residues) spans 26 to 38; the sequence is DSPQMTATAQPPS. Positions 96–179 constitute an MEIS N-terminal domain; sequence GSECITSASF…MHSDNLLRND (84 aa). A DNA-binding region (homeobox) is located at residues 291–350; sequence KRGVLPKHATNIMRSWLFQHLMHPYPTEDEKRQIAAQTNLTLLQVNNWFINARRRILQPM. Disordered stretches follow at residues 351-371, 385-405, and 423-474; these read LDAS…QHRP, LQQQ…LDNL, and AAHD…DSLE. Residues 361 to 371 are compositionally biased toward basic residues; the sequence is KAKKIKSQHRP. A compositionally biased stretch (acidic residues) spans 429 to 456; the sequence is LDGTEEEDEDDMEEEEEEEEELEEEADE.

The protein belongs to the TALE/MEIS homeobox family.

Its subcellular location is the nucleus. This is Homeobox protein PKNOX2 (Pknox2) from Mus musculus (Mouse).